Consider the following 396-residue polypeptide: MTTNTVSRKVAWLRVVTLAVAAFIFNTTEFVPVGLLSDIAHSFHMQTAQVGIMLTIYAWVVALMSLPFMLMTSQVERRKLLICLFVVFIASHVLSFLSWSFTVLVISRIGVAFAHAIFWSITASLAIRMAPAGKRAQALSLIATGTALAMVLGLPLGRIVGQYFGWRMTFFAIGIGALITLLCLIKLLPLLPSEHSGSLKSLPLLFRRPALMSIYLLTVVVVTAHYTAYSYIEPFVQNIAGFSANFATALLLLLGGAGIIGSVIFGKLGNQYASALVSTAIALLLVCLALLLPAANSEIHLGVLSIFWGIAMMIIGLGMQVKVLALAPDATDVAMALFSGIFNIGIGAGALVGNQVSLHWSMSMIGYVGAVPAFAALIWSIIIFRRWPVTLEEQTQ.

The next 12 helical transmembrane spans lie at 15–35 (VVTL…PVGL), 50–70 (VGIM…PFML), 81–101 (LICL…SWSF), 103–123 (VLVI…SITA), 136–156 (AQAL…GLPL), 170–190 (FFAI…LLPL), 209–229 (PALM…YTAY), 246–266 (FATA…VIFG), 275–295 (ALVS…LPAA), 299–319 (IHLG…GLGM), 333–353 (VAMA…ALVG), and 364–384 (MIGY…IIIF).

This sequence belongs to the major facilitator superfamily. SotB (TC 2.A.1.2) family.

Its subcellular location is the cell inner membrane. In terms of biological role, involved in the efflux of sugars. The physiological role may be the reduction of the intracellular concentration of toxic sugars or sugar metabolites. The protein is Probable sugar efflux transporter of Escherichia coli O127:H6 (strain E2348/69 / EPEC).